The sequence spans 227 residues: Small ribosomal subunit protein uS7 (227 aa).

Composition is skewed to acidic residues over residues 1–12 and 20–31; these read MSESDTDPDIDD and NDVDVAVDESES. The tract at residues 1–43 is disordered; it reads MSESDTDPDIDDDAHNNGDNDVDVAVDESESAETTTDTDTASA. Low complexity predominate over residues 32–43; sequence AETTTDTDTASA.

It belongs to the universal ribosomal protein uS7 family. Part of the 30S ribosomal subunit.

One of the primary rRNA binding proteins, it binds directly to 16S rRNA where it nucleates assembly of the head domain of the 30S subunit. Is located at the subunit interface close to the decoding center. In Haloquadratum walsbyi (strain DSM 16790 / HBSQ001), this protein is Small ribosomal subunit protein uS7.